The sequence spans 510 residues: MNKIIIRKTEDLKEWRRNLKCDINFIPTMGNLHDGHQKLISTAQSSNCNTNLLSIFVNPLQFDSKEDLKSYPKTVDKDIEIAFSNGADAIFIPNVTDIYPKKNKSISYLKASKELSSALCGLTRVGHFDGVCTVVYRLLKLIQPKNLFLGEKDWQQLLIIKNLIEEKKFNIKIIPVPTQRDSDGVPFSSRNKHLSKSERKSLKLFSNELENAKIIFKKDKRIDLKQLTNKLKSKNISIEYLEHLHPYSLKKVQSNDNISILAGAIKCGKTRLIDHVFLMKRKPIIAIDGPAGSGKSTITKLIAKELNLLYLDTGAMYRAISWLFKKEKIDYAKESELKKILNNISIIFKSNSISQQDVFINNFCVTEEIRSQEISSIVSKISSIKKVREFLVYEQRKIGQSGGLVAEGRDIGTTVFPNAELKIFLTASIDERAKRRKSELDLRGTEEIDFNQLRELIRKRDFEDSTRKISPLKKANDAIELLTDGYSINEVVEKIVNIYNLNIPKEIQLE.

A pantoate--beta-alanine ligase region spans residues Met-1–Val-276. An ATP-binding site is contributed by Met-29–His-36. The Proton donor role is filled by His-36. Residue Gln-61 coordinates (R)-pantoate. Gln-61 contributes to the beta-alanine binding site. Position 150–153 (Gly-150–Asp-153) interacts with ATP. Residue Gln-156 coordinates (R)-pantoate. Residue Phe-187–Arg-190 coordinates ATP. The cytidylate kinase stretch occupies residues Phe-277–Glu-510.

The protein in the N-terminal section; belongs to the pantothenate synthetase family. This sequence in the C-terminal section; belongs to the cytidylate kinase family. Type 1 subfamily.

It localises to the cytoplasm. It carries out the reaction (R)-pantoate + beta-alanine + ATP = (R)-pantothenate + AMP + diphosphate + H(+). It catalyses the reaction CMP + ATP = CDP + ADP. The enzyme catalyses dCMP + ATP = dCDP + ADP. Its pathway is cofactor biosynthesis; (R)-pantothenate biosynthesis; (R)-pantothenate from (R)-pantoate and beta-alanine: step 1/1. Its function is as follows. Catalyzes the condensation of pantoate with beta-alanine in an ATP-dependent reaction via a pantoyl-adenylate intermediate. Catalyzes the transfer of a phosphate group from ATP to either CMP or dCMP to form CDP or dCDP and ADP, respectively. This Prochlorococcus marinus subsp. pastoris (strain CCMP1986 / NIES-2087 / MED4) protein is Bifunctional pantoate ligase/cytidylate kinase.